We begin with the raw amino-acid sequence, 124 residues long: Probable dihydroneopterin aldolase (124 aa).

Residues Glu-23, Tyr-56, and Ile-75–Glu-76 contribute to the substrate site. The active-site Proton donor/acceptor is Lys-103.

It belongs to the DHNA family.

It carries out the reaction 7,8-dihydroneopterin = 6-hydroxymethyl-7,8-dihydropterin + glycolaldehyde. It participates in cofactor biosynthesis; tetrahydrofolate biosynthesis; 2-amino-4-hydroxy-6-hydroxymethyl-7,8-dihydropteridine diphosphate from 7,8-dihydroneopterin triphosphate: step 3/4. Functionally, catalyzes the conversion of 7,8-dihydroneopterin to 6-hydroxymethyl-7,8-dihydropterin. This chain is Probable dihydroneopterin aldolase (folB), found in Chlamydia trachomatis serovar D (strain ATCC VR-885 / DSM 19411 / UW-3/Cx).